Here is a 366-residue protein sequence, read N- to C-terminus: E3 ubiquitin-protein ligase SINA-like 1 (366 aa).

Positions 1–37 are disordered; sequence MVKGTNAEQALAREEASSSRPKRQRVPSIVEEEGENG. An RING-type; degenerate zinc finger spans residues 56-92; it reads CPICCNALTIPIFQCDKGHIACSSCCTNVSNKCPYCS. The interval 106-354 is SBD; that stretch reads VVEAFIVRCP…KGTYICIRSL (249 aa). The SIAH-type; degenerate zinc-finger motif lies at 109 to 232; the sequence is AFIVRCPIVA…LYSHYAANHK (124 aa). The Zn(2+) site is built by Cys114, Cys186, His198, Cys202, Cys209, Cys214, His226, and His231.

It belongs to the SINA (Seven in absentia) family.

The catalysed reaction is S-ubiquitinyl-[E2 ubiquitin-conjugating enzyme]-L-cysteine + [acceptor protein]-L-lysine = [E2 ubiquitin-conjugating enzyme]-L-cysteine + N(6)-ubiquitinyl-[acceptor protein]-L-lysine.. The protein operates within protein modification; protein ubiquitination. Its function is as follows. E3 ubiquitin-protein ligase that mediates ubiquitination and subsequent proteasomal degradation of target proteins. E3 ubiquitin ligases accept ubiquitin from an E2 ubiquitin-conjugating enzyme in the form of a thioester and then directly transfers the ubiquitin to targeted substrates. It probably triggers the ubiquitin-mediated degradation of different substrates. In Arabidopsis thaliana (Mouse-ear cress), this protein is E3 ubiquitin-protein ligase SINA-like 1.